Here is a 338-residue protein sequence, read N- to C-terminus: Glyceraldehyde-3-phosphate dehydrogenase 2 (338 aa).

NAD(+) is bound by residues 13-14 (TI) and glycine 111. 140-142 (SCN) contributes to the D-glyceraldehyde 3-phosphate binding site. Residue cysteine 141 is the Nucleophile of the active site. Residue arginine 169 participates in NAD(+) binding. 195–196 (HG) contributes to the D-glyceraldehyde 3-phosphate binding site. Glutamine 300 is a binding site for NAD(+).

It belongs to the glyceraldehyde-3-phosphate dehydrogenase family. In terms of assembly, homotetramer.

Its subcellular location is the cytoplasm. The catalysed reaction is D-glyceraldehyde 3-phosphate + phosphate + NADP(+) = (2R)-3-phospho-glyceroyl phosphate + NADPH + H(+). It catalyses the reaction D-glyceraldehyde 3-phosphate + phosphate + NAD(+) = (2R)-3-phospho-glyceroyl phosphate + NADH + H(+). Its pathway is carbohydrate degradation; glycolysis; pyruvate from D-glyceraldehyde 3-phosphate: step 1/5. The protein is Glyceraldehyde-3-phosphate dehydrogenase 2 of Methanosarcina barkeri (strain Fusaro / DSM 804).